A 281-amino-acid polypeptide reads, in one-letter code: Lipoyl synthase (281 aa).

The [4Fe-4S] cluster site is built by C35, C40, C46, C61, C65, C68, and S274. Positions 47-263 constitute a Radical SAM core domain; the sequence is FGCGQATFLI…RDEALALGFR (217 aa).

The protein belongs to the radical SAM superfamily. Lipoyl synthase family. [4Fe-4S] cluster serves as cofactor.

It localises to the cytoplasm. The catalysed reaction is [[Fe-S] cluster scaffold protein carrying a second [4Fe-4S](2+) cluster] + N(6)-octanoyl-L-lysyl-[protein] + 2 oxidized [2Fe-2S]-[ferredoxin] + 2 S-adenosyl-L-methionine + 4 H(+) = [[Fe-S] cluster scaffold protein] + N(6)-[(R)-dihydrolipoyl]-L-lysyl-[protein] + 4 Fe(3+) + 2 hydrogen sulfide + 2 5'-deoxyadenosine + 2 L-methionine + 2 reduced [2Fe-2S]-[ferredoxin]. The protein operates within protein modification; protein lipoylation via endogenous pathway; protein N(6)-(lipoyl)lysine from octanoyl-[acyl-carrier-protein]: step 2/2. Its function is as follows. Catalyzes the radical-mediated insertion of two sulfur atoms into the C-6 and C-8 positions of the octanoyl moiety bound to the lipoyl domains of lipoate-dependent enzymes, thereby converting the octanoylated domains into lipoylated derivatives. This Trichlorobacter lovleyi (strain ATCC BAA-1151 / DSM 17278 / SZ) (Geobacter lovleyi) protein is Lipoyl synthase.